The primary structure comprises 154 residues: Stigma-specific STIG1-like protein 3 (154 aa).

The first 23 residues, 1-23, serve as a signal peptide directing secretion; that stretch reads MGHRNTVLTILLTISIAIMVLIA.

The protein belongs to the STIG1 family.

This Arabidopsis thaliana (Mouse-ear cress) protein is Stigma-specific STIG1-like protein 3.